The chain runs to 335 residues: Zinc-type alcohol dehydrogenase-like protein SAR2277 (335 aa).

Belongs to the zinc-containing alcohol dehydrogenase family. Quinone oxidoreductase subfamily.

The chain is Zinc-type alcohol dehydrogenase-like protein SAR2277 from Staphylococcus aureus (strain MRSA252).